Here is a 116-residue protein sequence, read N- to C-terminus: U16-barytoxin-Tl1b (116 aa).

Positions 1 to 20 (MKTIIVFLSLLVLATKFGDA) are cleaved as a signal peptide. The propeptide occupies 21 to 74 (KEGVNQKQKKEVTQNEFREEYLNEMAAMSLVQQLEAIERALFENEAGRNSRQKR). 3 cysteine pairs are disulfide-bonded: Cys-75/Cys-90, Cys-82/Cys-95, and Cys-89/Cys-110.

It belongs to the neurotoxin 14 (magi-1) family. 06 (ICK-Trit) subfamily. As to expression, expressed by the venom gland.

It is found in the secreted. Functionally, ion channel inhibitor. The chain is U16-barytoxin-Tl1b from Trittame loki (Brush-footed trapdoor spider).